Reading from the N-terminus, the 249-residue chain is E3 ubiquitin-protein ligase RMA1 (249 aa).

An RING-type zinc finger spans residues 48-97 (CNICLDSVQEPVVTLCGHLFCWPCIHKWLDVQSFSTSDEYQRHRQCPVCK). A helical; Anchor for type IV membrane protein transmembrane segment spans residues 231–248 (LGRIFFFFMCCVVLCLLL).

Ubiquitous. Highly expressed in roots.

It is found in the endoplasmic reticulum membrane. The enzyme catalyses S-ubiquitinyl-[E2 ubiquitin-conjugating enzyme]-L-cysteine + [acceptor protein]-L-lysine = [E2 ubiquitin-conjugating enzyme]-L-cysteine + N(6)-ubiquitinyl-[acceptor protein]-L-lysine.. It participates in protein modification; protein ubiquitination. Its function is as follows. E3 ubiquitin-protein ligase that promotes the ubiquitination and proteasomal degradation of aquaporin PIP2-1. Forms a ubiquitin ligase complex in cooperation with the E2 enzymes UCB8/UCB10. The protein is E3 ubiquitin-protein ligase RMA1 (RMA1) of Arabidopsis thaliana (Mouse-ear cress).